We begin with the raw amino-acid sequence, 633 residues long: Protein arginine N-methyltransferase 5 (633 aa).

The SAM-dependent MTase PRMT-type domain maps to 304–611; sequence LQSPLQPLMD…NNGKKVWYEW (308 aa). Tyrosine 320 is a binding site for S-adenosyl-L-methionine. A protein is bound at residue phenylalanine 323. Residues 329 to 330, glutamate 388, and 414 to 416 each bind S-adenosyl-L-methionine; these read KY and GDM. Residues glutamate 431 and glutamate 440 each coordinate a protein. Catalysis depends on proton donor/acceptor residues glutamate 431 and glutamate 440. Glutamate 440 provides a ligand contact to S-adenosyl-L-methionine.

The protein belongs to the class I-like SAM-binding methyltransferase superfamily. Protein arginine N-methyltransferase family. Heterotetramer; dimer of heterodimer with wdr77. Interacts with wee2-a; this interaction is disrupted upon activation of the DNA replication checkpoint. Detected in egg (at protein level).

Its subcellular location is the cytoplasm. The protein localises to the nucleus. The protein resides in the cytosol. The enzyme catalyses L-arginyl-[protein] + 2 S-adenosyl-L-methionine = N(omega),N(omega)'-dimethyl-L-arginyl-[protein] + 2 S-adenosyl-L-homocysteine + 2 H(+). Its function is as follows. Arginine methyltransferase that can both catalyze the formation of omega-N monomethylarginine (MMA) and symmetrical dimethylarginine (sDMA), with a preference for the formation of MMA. Specifically mediates the symmetrical dimethylation of arginine residues in the small nuclear ribonucleoproteins; such methylation being required for the assembly and biogenesis of snRNP core particles. Methylates the arginine in the motif G-R-G-X-G in its substrates histone H2A, H2AX and H4, producing both monomethylated and symmetrically dimethylated 'Arg-3'. Methylates nucleoplasmin at 'Arg-192', producing both monomethylated and symmetrically dimethylated 'Arg-192'. Involved in the DNA replication checkpoint. Promotes entry into mitosis by promoting the proteasomal degradation of wee2-a. May act as a transcriptional corepressor in CRY1-mediated repression of the core circadian component PER1. Involved in spliceosome maturation and mRNA splicing. The polypeptide is Protein arginine N-methyltransferase 5 (prmt5) (Xenopus laevis (African clawed frog)).